Consider the following 132-residue polypeptide: Ribonuclease P protein component (132 aa).

It belongs to the RnpA family. Consists of a catalytic RNA component (M1 or rnpB) and a protein subunit.

The enzyme catalyses Endonucleolytic cleavage of RNA, removing 5'-extranucleotides from tRNA precursor.. Functionally, RNaseP catalyzes the removal of the 5'-leader sequence from pre-tRNA to produce the mature 5'-terminus. It can also cleave other RNA substrates such as 4.5S RNA. The protein component plays an auxiliary but essential role in vivo by binding to the 5'-leader sequence and broadening the substrate specificity of the ribozyme. This is Ribonuclease P protein component from Marinobacter nauticus (strain ATCC 700491 / DSM 11845 / VT8) (Marinobacter aquaeolei).